The sequence spans 397 residues: Tryptophan synthase beta chain (397 aa).

Lys86 is subject to N6-(pyridoxal phosphate)lysine.

Belongs to the TrpB family. Tetramer of two alpha and two beta chains. Pyridoxal 5'-phosphate is required as a cofactor.

The enzyme catalyses (1S,2R)-1-C-(indol-3-yl)glycerol 3-phosphate + L-serine = D-glyceraldehyde 3-phosphate + L-tryptophan + H2O. It participates in amino-acid biosynthesis; L-tryptophan biosynthesis; L-tryptophan from chorismate: step 5/5. Functionally, the beta subunit is responsible for the synthesis of L-tryptophan from indole and L-serine. This Aeromonas salmonicida (strain A449) protein is Tryptophan synthase beta chain.